Here is a 245-residue protein sequence, read N- to C-terminus: Putative outer membrane protein RBE_0022 (245 aa).

The first 23 residues, 1–23, serve as a signal peptide directing secretion; it reads MIRMSKRLGVILFVSCISINSFA.

It belongs to the OmpW/AlkL family.

The protein localises to the cell outer membrane. This Rickettsia bellii (strain RML369-C) protein is Putative outer membrane protein RBE_0022.